We begin with the raw amino-acid sequence, 358 residues long: MLPEKRLLTPDDMKLWEESPTRAHFTKFIIDLAESVKGHENSQYKEPISESINSMMNLLSQIKDITQKHPVIKDADSSRFGKVEFRDFYDEVSRNSRKILRSEFPSLTDEQLEQLSIYLDESWGNKRRIDYGSGHELNFMCLLYGLYSYGIFNLSNDSTNLVLKVFIEYLKIMRILETKYWLEPAGSHGVWGLDDYHFLPFLFGAFQLTTHKHLKPISIHNNELVEMFAHRYLYFGCIAFINKVKSSASLRWHSPMLDDISGVKTWSKVAEGMIKMYKAEVLSKLPIMQHFYFSEFLPCPDGVSPPRGHIHDGTDKDDECNFEGHVHTTWGDCCGIKLPSAIAATEMNKKHHKPIPFD.

As to quaternary structure, interacts with the phosphatase PP2A catalytic subunits PPH21 and PPH22. Forms a ternary complex with PPH21-TAP42.

It is found in the cytoplasm. It carries out the reaction [protein]-peptidylproline (omega=180) = [protein]-peptidylproline (omega=0). PPIases accelerate the folding of proteins. It catalyzes the cis-trans isomerization of proline imidic peptide bonds in oligopeptides. Acts as a regulatory subunit for TAP42-associated PP2A-like phosphatases modulating their activity or substrate specificity, probably by inducing a conformational change in the catalytic subunit, a direct target of the PPIase. Can reactivate inactive phosphatase PP2A-phosphatase methylesterase complexes (PP2Ai) in presence of ATP and Mg(2+) by dissociating the inactive form from the complex. Acts also inhibitory at high concentrations. Involved in the regulation of cell cycle progression, mitotic spindle formation and bud morphogenesis. The polypeptide is Serine/threonine-protein phosphatase 2A activator 2 (RRD2) (Saccharomyces cerevisiae (strain ATCC 204508 / S288c) (Baker's yeast)).